The chain runs to 365 residues: Cobalt-precorrin-5B C(1)-methyltransferase (365 aa).

This sequence belongs to the CbiD family.

The enzyme catalyses Co-precorrin-5B + S-adenosyl-L-methionine = Co-precorrin-6A + S-adenosyl-L-homocysteine. It participates in cofactor biosynthesis; adenosylcobalamin biosynthesis; cob(II)yrinate a,c-diamide from sirohydrochlorin (anaerobic route): step 6/10. Catalyzes the methylation of C-1 in cobalt-precorrin-5B to form cobalt-precorrin-6A. This chain is Cobalt-precorrin-5B C(1)-methyltransferase, found in Methanococcus maripaludis (strain C6 / ATCC BAA-1332).